The following is a 346-amino-acid chain: Ribosomal RNA small subunit methyltransferase H (346 aa).

S-adenosyl-L-methionine contacts are provided by residues 47-49 (GGY), Asp-65, Phe-92, Asp-113, and Gln-120. A compositionally biased stretch (basic and acidic residues) spans 270 to 279 (RGEAPSRRLP). The tract at residues 270–346 (RGEAPSRRLP…ALPQRAAKGR (77 aa)) is disordered.

Belongs to the methyltransferase superfamily. RsmH family.

Its subcellular location is the cytoplasm. It catalyses the reaction cytidine(1402) in 16S rRNA + S-adenosyl-L-methionine = N(4)-methylcytidine(1402) in 16S rRNA + S-adenosyl-L-homocysteine + H(+). Functionally, specifically methylates the N4 position of cytidine in position 1402 (C1402) of 16S rRNA. This Methylocella silvestris (strain DSM 15510 / CIP 108128 / LMG 27833 / NCIMB 13906 / BL2) protein is Ribosomal RNA small subunit methyltransferase H.